Consider the following 344-residue polypeptide: Meiotically up-regulated gene 10 protein (344 aa).

Positions 48-207 constitute a DH domain; sequence EFNSILQEII…RELCSYIDQE (160 aa).

It is found in the cytoplasm. The protein resides in the nucleus. Functionally, has a role in meiosis. This chain is Meiotically up-regulated gene 10 protein (mug10), found in Schizosaccharomyces pombe (strain 972 / ATCC 24843) (Fission yeast).